The primary structure comprises 409 residues: Lissencephaly-1 homolog (409 aa).

The LisH domain maps to 7-39 (RRERSNQAIADYLGSNGYTDALEAFRKEADMPN). The stretch at 54–81 (TSVIRLQKKVMELEAKLSEAEKEAIEGA) forms a coiled coil. 7 WD repeats span residues 104 to 145 (GHRA…RTLK), 146 to 185 (GHTDSVQDLAFDSHGKLLASCSSDLSIKLWDFQQTFECVK), 189 to 228 (GHDHNVSSVSFVPAGDYLLSASRDKTIKMWEVATGYCVKT), 231 to 270 (GHREWVRMVRVNVDGSLMASCSNDHSVRVWQTNSKECKAE), 273 to 332 (EHEN…CLFT), 335 to 374 (GHDNWVRGIVFHPGGKYMLSASDDKTLRIWDLRNKRCMKT), and 377 to 409 (AHSHFCTSLDMHKSHPYVISGSVDTTVKVWECR).

The protein belongs to the WD repeat LIS1/nudF family.

It is found in the cytoplasm. Its subcellular location is the cytoskeleton. The protein localises to the microtubule organizing center. It localises to the centrosome. Positively regulates the activity of the minus-end directed microtubule motor protein dynein. May enhance dynein-mediated microtubule sliding by targeting dynein to the microtubule plus end. Required for several dynein- and microtubule-dependent processes. This chain is Lissencephaly-1 homolog, found in Aedes aegypti (Yellowfever mosquito).